Consider the following 336-residue polypeptide: Glucan endo-1,3-beta-glucosidase A (336 aa).

The signal sequence occupies residues 1 to 23; the sequence is MAFLSSLLASLLLVGLLIQITGA. Position 24 is a pyrrolidone carboxylic acid (Q24). E118 functions as the Proton donor in the catalytic mechanism. Catalysis depends on E257, which acts as the Nucleophile.

Belongs to the glycosyl hydrolase 17 family.

Its subcellular location is the secreted. The protein resides in the extracellular space. The catalysed reaction is Hydrolysis of (1-&gt;3)-beta-D-glucosidic linkages in (1-&gt;3)-beta-D-glucans.. Its function is as follows. Implicated in the defense of plants against pathogens. The protein is Glucan endo-1,3-beta-glucosidase A of Solanum lycopersicum (Tomato).